Reading from the N-terminus, the 352-residue chain is tRNA pseudouridine synthase D (352 aa).

Residue D78 is the Nucleophile of the active site. One can recognise a TRUD domain in the interval 153–299 (GVPNYYGEQR…LDQDRRPLLL (147 aa)).

Belongs to the pseudouridine synthase TruD family.

The enzyme catalyses uridine(13) in tRNA = pseudouridine(13) in tRNA. Its function is as follows. Responsible for synthesis of pseudouridine from uracil-13 in transfer RNAs. This is tRNA pseudouridine synthase D from Aeromonas hydrophila subsp. hydrophila (strain ATCC 7966 / DSM 30187 / BCRC 13018 / CCUG 14551 / JCM 1027 / KCTC 2358 / NCIMB 9240 / NCTC 8049).